The chain runs to 2280 residues: Metacaspase-3 (2280 aa).

Disordered regions lie at residues 56-83, 202-284, 791-819, 931-954, 994-1015, 1278-1306, and 1469-1500; these read ILSK…DRED, YSTE…THRG, YKNS…MVNN, DDNS…RYDK, SGKY…DDSE, KTNN…NPFI, and KAPT…NANA. The segment covering 63-83 has biased composition (basic and acidic residues); the sequence is NKNENIKKRINEKDNDTDRED. Polar residues-rich tracts occupy residues 205 to 219 and 228 to 278; these read EHTQ…TSKR and DKAQ…NRKG. Composition is skewed to low complexity over residues 793–819 and 931–941; these read NSMN…MVNN and DDNSVQDSFFS. Low complexity-rich tracts occupy residues 1278-1303 and 1482-1500; these read KTNN…NNSN and APTN…NANA.

This sequence belongs to the peptidase C14B family.

Protease that cleaves specifically after arginine or lysine residues. The chain is Metacaspase-3 from Plasmodium falciparum (isolate 3D7).